A 932-amino-acid chain; its full sequence is Envelope glycoprotein B (932 aa).

A compositionally biased stretch (low complexity) spans Met-1–Gly-12. Disordered stretches follow at residues Met-1 to Arg-25 and Gly-67 to Asn-105. Residues Met-1 to Ala-62 form the signal peptide. The Virion surface portion of the chain corresponds to Ala-63–Pro-806. The span at Thr-71–Pro-95 shows a compositional bias: pro residues. N-linked (GlcNAc...) asparagine; by host glycans are attached at residues Asn-105 and Asn-153. 5 cysteine pairs are disulfide-bonded: Cys-128/Cys-607, Cys-145/Cys-563, Cys-218/Cys-282, Cys-375/Cys-423, and Cys-628/Cys-665. 2 involved in fusion and/or binding to host membrane regions span residues Thr-184–Tyr-190 and Gly-269–Thr-276. Asn-441 and Asn-483 each carry an N-linked (GlcNAc...) asparagine; by host glycan. The interval Ala-492–Gly-527 is disordered. Over residues Gly-511–Gly-526 the composition is skewed to gly residues. N-linked (GlcNAc...) asparagine; by host glycosylation is found at Asn-640 and Asn-706. 2 hydrophobic membrane proximal region regions span residues Ile-751–Ala-804 and Val-784–Ala-804. Residues Phe-807 to Tyr-827 traverse the membrane as a helical segment. Over Arg-828–Ala-932 the chain is Intravirion. Positions Tyr-880–Leu-883 match the Golgi targeting motif. The short motif at Tyr-921–Leu-924 is the Internalization motif element.

The protein belongs to the herpesviridae glycoprotein B family. Homotrimer; disulfide-linked. Binds to heparan sulfate proteoglycans. Interacts with gH/gL heterodimer. A proteolytic cleavage by host furin generates two subunits that remain linked by disulfide bonds.

It localises to the virion membrane. The protein resides in the host cell membrane. It is found in the host endosome membrane. The protein localises to the host Golgi apparatus membrane. In terms of biological role, envelope glycoprotein that forms spikes at the surface of virion envelope. Essential for the initial attachment to heparan sulfate moieties of the host cell surface proteoglycans. Involved in fusion of viral and cellular membranes leading to virus entry into the host cell. Following initial binding to its host receptors, membrane fusion is mediated by the fusion machinery composed at least of gB and the heterodimer gH/gL. May be involved in the fusion between the virion envelope and the outer nuclear membrane during virion egress. The sequence is that of Envelope glycoprotein B from Bos taurus (Bovine).